Here is a 21-residue protein sequence, read N- to C-terminus: Cytoplasmic filament protein A (21 aa).

A disordered region spans residues 1 to 21 (AILELPQSPNVFHPEKPSAVG).

The protein localises to the cytoplasm. In terms of biological role, component of the cytoplasmic filaments that run the length of the organism just underneath the cytoplasmic membrane. The chain is Cytoplasmic filament protein A (cfpA) from Treponema phagedenis.